A 346-amino-acid chain; its full sequence is MSMVSEFLKQAYFIDNQEQDYVKTVKSSKGGPGSAVSPYPSFDASSDVAALHKAITVKGVDEATIIDILTKRNNAQRQQIKAAYLQEKGKPLDEALKKALTGHLEEVVLALLKTPAQLDADELRAAMKGLGTDEDTLIEILVSRKNREIKEINRVYRDELKRDLAKDITSDTSGDFQKALLSLAKGDRCEDLSVNDDLADSDARALYEAGERRKGTDVNVFITILTTRSYSHLRRVFQKYTKYSQHDMNKALDLELKGDIENCLTAIVKCATSTPAFFAEKLHLAMKGAGTRHKALIRIMVSRSEIDMNDIKVYYQKMYGISLCQAILDETKGDYEKILVALCGGQ.

A Phosphoserine; by TRPM7 modification is found at Ser-5. An Isoglutamyl lysine isopeptide (Gln-Lys) (interchain with K-?) cross-link involves residue Gln-19. The residue at position 21 (Tyr-21) is a Phosphotyrosine; by EGFR. A Phosphoserine; by PKC modification is found at Ser-27. Ser-34 and Ser-37 each carry phosphoserine. Annexin repeat units lie at residues 42–113 (FDAS…ALLK), 114–185 (TPAQ…SLAK), 197–269 (DLAD…AIVK), and 273–344 (STPA…ALCG). Position 58 is an N6-acetyllysine (Lys-58). 11 residues coordinate Ca(2+): Gly-59, Val-60, Glu-62, Lys-97, Leu-100, Glu-105, Met-127, Gly-129, Gly-131, Thr-132, and Glu-134. Thr-136 is modified (phosphothreonine). Ca(2+) contacts are provided by Asp-171, Gly-210, and Arg-213. Residue Lys-214 forms a Glycyl lysine isopeptide (Lys-Gly) (interchain with G-Cter in SUMO1); alternate linkage. A Glycyl lysine isopeptide (Lys-Gly) (interchain with G-Cter in SUMO2); alternate cross-link involves residue Lys-214. Gly-215 provides a ligand contact to Ca(2+). Residue Lys-239 is modified to N6-acetyllysine. Positions 253, 255, and 256 each coordinate Ca(2+). Lys-257 is covalently cross-linked (Glycyl lysine isopeptide (Lys-Gly) (interchain with G-Cter in SUMO1)). Residues Glu-261, Met-286, Gly-288, and Gly-290 each coordinate Ca(2+). An N6-acetyllysine modification is found at Lys-312. Cys-324 and Cys-343 are disulfide-bonded. Ca(2+) is bound by residues Leu-328, Glu-330, and Thr-331. Lys-332 is covalently cross-linked (Glycyl lysine isopeptide (Lys-Gly) (interchain with G-Cter in SUMO1)). A Ca(2+)-binding site is contributed by Glu-336.

Belongs to the annexin family. Homodimer; non-covalently linked. Homodimer; linked by transglutamylation. Homodimers linked by transglutamylation are observed in placenta, but not in other tissues. Interacts with S100A11. Heterotetramer, formed by two molecules each of S100A11 and ANXA1. Interacts with DYSF. Interacts with EGFR. In terms of processing, phosphorylated by protein kinase C, EGFR and TRPM7. Phosphorylated in response to EGF treatment. Sumoylated. Post-translationally, proteolytically cleaved by cathepsin CTSG to release the active N-terminal peptide Ac2-26.

Its subcellular location is the nucleus. The protein localises to the cytoplasm. The protein resides in the cell projection. It is found in the cilium. It localises to the basolateral cell membrane. Its subcellular location is the lateral cell membrane. The protein localises to the cell membrane. The protein resides in the apical cell membrane. It is found in the membrane. It localises to the endosome membrane. Its subcellular location is the secreted. The protein localises to the extracellular space. The protein resides in the early endosome. It is found in the cytoplasmic vesicle membrane. It localises to the extracellular exosome. Its subcellular location is the cytoplasmic vesicle. The protein localises to the secretory vesicle lumen. The protein resides in the phagocytic cup. Functionally, plays important roles in the innate immune response as effector of glucocorticoid-mediated responses and regulator of the inflammatory process. Has anti-inflammatory activity. Plays a role in glucocorticoid-mediated down-regulation of the early phase of the inflammatory response. Contributes to the adaptive immune response by enhancing signaling cascades that are triggered by T-cell activation, regulates differentiation and proliferation of activated T-cells. Promotes the differentiation of T-cells into Th1 cells and negatively regulates differentiation into Th2 cells. Has no effect on unstimulated T-cells. Negatively regulates hormone exocytosis via activation of the formyl peptide receptors and reorganization of the actin cytoskeleton. Has high affinity for Ca(2+) and can bind up to eight Ca(2+) ions. Displays Ca(2+)-dependent binding to phospholipid membranes. Plays a role in the formation of phagocytic cups and phagosomes. Plays a role in phagocytosis by mediating the Ca(2+)-dependent interaction between phagosomes and the actin cytoskeleton. In terms of biological role, functions at least in part by activating the formyl peptide receptors and downstream signaling cascades. Promotes chemotaxis of granulocytes and monocytes via activation of the formyl peptide receptors. Promotes rearrangement of the actin cytoskeleton, cell polarization and cell migration. Promotes resolution of inflammation and wound healing. Acts via neutrophil N-formyl peptide receptors to enhance the release of CXCL2. In Cavia cutleri (Guinea pig), this protein is Annexin A1 (ANXA1).